The primary structure comprises 284 residues: NH(3)-dependent NAD(+) synthetase (284 aa).

51 to 58 lines the ATP pocket; it reads GISGGIDS. Asp57 provides a ligand contact to Mg(2+). Arg148 serves as a coordination point for deamido-NAD(+). Thr168 contributes to the ATP binding site. Position 173 (Glu173) interacts with Mg(2+). Deamido-NAD(+)-binding residues include Lys181 and Asp188. Lys197 and Thr219 together coordinate ATP. Residue 268-269 participates in deamido-NAD(+) binding; it reads HK.

Belongs to the NAD synthetase family. Homodimer.

It catalyses the reaction deamido-NAD(+) + NH4(+) + ATP = AMP + diphosphate + NAD(+) + H(+). It participates in cofactor biosynthesis; NAD(+) biosynthesis; NAD(+) from deamido-NAD(+) (ammonia route): step 1/1. In terms of biological role, catalyzes the ATP-dependent amidation of deamido-NAD to form NAD. Uses ammonia as a nitrogen source. This Burkholderia mallei (strain NCTC 10247) protein is NH(3)-dependent NAD(+) synthetase.